The primary structure comprises 620 residues: PAN2-PAN3 deadenylation complex subunit PAN3 (620 aa).

The C3H1-type zinc finger occupies 7–36 (SAKGTLCKNILIYGYCKYENKGCAFSHRRN). 2 disordered regions span residues 39–73 (ANSGPGATPAKSVATTPTSDKRKFNVNTPSFQPST) and 95–168 (VFVP…QPGP). Composition is skewed to polar residues over residues 63-73 (NVNTPSFQPST) and 101-126 (TPASPAQSTPSTGNQEQPMPTSTVSN). Residues 226 to 482 (QSYPGGPEIV…LESYIRKHLA (257 aa)) form a pseudokinase domain region. ATP is bound by residues Arg274, 323–330 (DYYPNAST), and 380–381 (SK). Positions 483 to 521 (IRLLDVVDMLEDSNDYLESQLSTELENARLVRLMTKINF) form a coiled coil. The tract at residues 522 to 620 (IVDRPEWDNE…SVFRTITRGK (99 aa)) is knob domain.

The protein belongs to the protein kinase superfamily. PAN3 family. In terms of assembly, homodimer. Forms a heterotrimer with a catalytic subunit PAN2 to form the poly(A)-nuclease (PAN) deadenylation complex. Interacts (via PAM-2 motif) with poly(A)-binding protein PAB1 (via PABC domain), conferring substrate specificity of the enzyme complex.

Its subcellular location is the cytoplasm. Its function is as follows. Regulatory subunit of the poly(A)-nuclease (PAN) deadenylation complex, one of two cytoplasmic mRNA deadenylases involved in mRNA turnover. PAN specifically shortens poly(A) tails of RNA and the activity is stimulated by poly(A)-binding protein PAB1. PAN deadenylation is followed by rapid degradation of the shortened mRNA tails by the CCR4-NOT complex. Deadenylated mRNAs are then degraded by two alternative mechanisms, namely exosome-mediated 3'-5' exonucleolytic degradation, or deadenylation-dependent mRNA decaping and subsequent 5'-3' exonucleolytic degradation by XRN1. May also be involved in post-transcriptional maturation of mRNA poly(A) tails. PAN3 acts as a positive regulator for PAN activity, recruiting the catalytic subunit PAN2 to mRNA via its interaction with RNA and with PAB1. This is PAN2-PAN3 deadenylation complex subunit PAN3 from Meyerozyma guilliermondii (strain ATCC 6260 / CBS 566 / DSM 6381 / JCM 1539 / NBRC 10279 / NRRL Y-324) (Yeast).